Consider the following 416-residue polypeptide: CBL-interacting serine/threonine-protein kinase 21 (416 aa).

The Protein kinase domain occupies 12 to 264 (YEIGRTIGEG…AEIIIKDSWF (253 aa)). ATP contacts are provided by residues 18-26 (IGEGNFAKV) and Lys-41. The active-site Proton acceptor is Asp-134. The activation loop stretch occupies residues 152 to 178 (DFGLSAVPKSGDMLSTACGSPCYIAPE). Phosphoserine is present on Ser-156. Thr-167 is modified (phosphothreonine). The region spanning 291–315 (ASSNFINAFQIIAMSSDLDLSGLFE) is the NAF domain. The PPI stretch occupies residues 321 to 351 (RYKTRIGSKNTAQETIKKIEAAATYVSLSVE).

The protein belongs to the protein kinase superfamily. CAMK Ser/Thr protein kinase family. SNF1 subfamily. As to quaternary structure, interacts with CBL9. Requires Mn(2+) as cofactor.

The enzyme catalyses L-seryl-[protein] + ATP = O-phospho-L-seryl-[protein] + ADP + H(+). It catalyses the reaction L-threonyl-[protein] + ATP = O-phospho-L-threonyl-[protein] + ADP + H(+). CIPK serine-threonine protein kinases interact with CBL proteins. Binding of a CBL protein to the regulatory NAF domain of CIPK protein lead to the activation of the kinase in a calcium-dependent manner. This chain is CBL-interacting serine/threonine-protein kinase 21 (CIPK21), found in Arabidopsis thaliana (Mouse-ear cress).